Consider the following 84-residue polypeptide: MAHKKGVGSSRNGRDSFSKRLGVKLFGGQIAKPGSIIIRQRGTKHHPKKNVYMGKDHTIHSLIYGKILFKKTNKKKSFISVIPI.

Belongs to the bacterial ribosomal protein bL27 family.

The chain is Large ribosomal subunit protein bL27 from Karelsulcia muelleri (strain GWSS) (Sulcia muelleri).